The sequence spans 514 residues: Deoxynucleoside triphosphate triphosphohydrolase SAMHD1 homolog (514 aa).

The tract at residues 1-24 (MNNTFKYVNEDVSGTEGEESDYDP) is disordered. Lys-80 provides a ligand contact to GTP. Asn-83 is a binding site for a 2'-deoxyribonucleoside 5'-triphosphate. A GTP-binding site is contributed by 101–109 (DTEQFQRLR). Gln-113 and Arg-128 together coordinate substrate. The 132-residue stretch at 128 to 259 (RFEHSIGVSH…SVDVDKFDYL (132 aa)) folds into the HD domain. Zn(2+)-binding residues include His-131, His-170, and Asp-171. His-174 provides a ligand contact to substrate. His-196 is an active-site residue. Substrate contacts are provided by residues 252-258 (DVDKFDY), Tyr-258, and Asp-262. Asp-254 contacts Zn(2+). Residues Arg-276, 291-293 (LSK), and Asn-297 contribute to the a 2'-deoxyribonucleoside 5'-triphosphate site. Substrate-binding positions include Arg-305 and 309-314 (HKLVYT). The a 2'-deoxyribonucleoside 5'-triphosphate site is built by His-315 and Lys-316. 2 residues coordinate GTP: Arg-380 and Lys-384.

It belongs to the SAMHD1 family. As to quaternary structure, homodimer; in absence of GTP and dNTP. Homotetramer; in GTP- and dNTP-bound form. Zn(2+) is required as a cofactor.

It catalyses the reaction a 2'-deoxyribonucleoside 5'-triphosphate + H2O = a 2'-deoxyribonucleoside + triphosphate + H(+). With respect to regulation, allosterically activated and regulated via the combined actions of GTP and dNTPs (dATP, dGTP, dTTP and dCTP): Allosteric site 1 binds GTP, while allosteric site 2 binds dNTP. Allosteric activation promotes the formation of highly active homotetramers. In terms of biological role, has deoxynucleoside triphosphate (dNTPase) activity. The protein is Deoxynucleoside triphosphate triphosphohydrolase SAMHD1 homolog of Dictyostelium discoideum (Social amoeba).